The chain runs to 155 residues: MVCTPAENFNNSLTIASKPKNEAGLAPLLLTVLELVRQLMEAQVIRRMEEDLLSEPDLERAADSLQKLEEQILHLCEMFEVDPADLNINLGEIGTLLPSSGSYYPGQPSSRPSVLELLDRLLNTGIVVDGEIDLGIAQIDLIHAKLRLVLTSKPI.

It belongs to the gas vesicle GvpK family.

Its subcellular location is the gas vesicle. Might be involved in nucleating gas vesicle formation. Gas vesicles (GV) are hollow, gas filled proteinaceous nanostructures. During planktonic growth they allow positioning of the organism at a favorable depth for light or nutrient acquisition. In Dolichospermum flosaquae (Anabaena flos-aquae), this protein is Gas vesicle protein K.